A 154-amino-acid polypeptide reads, in one-letter code: 6,7-dimethyl-8-ribityllumazine synthase (154 aa).

Residues Phe-23, 57–59, and 81–83 each bind 5-amino-6-(D-ribitylamino)uracil; these read AFE and AVI. 86–87 serves as a coordination point for (2S)-2-hydroxy-3-oxobutyl phosphate; that stretch reads ST. His-89 acts as the Proton donor in catalysis. Phe-114 lines the 5-amino-6-(D-ribitylamino)uracil pocket. Arg-128 contacts (2S)-2-hydroxy-3-oxobutyl phosphate.

This sequence belongs to the DMRL synthase family.

It carries out the reaction (2S)-2-hydroxy-3-oxobutyl phosphate + 5-amino-6-(D-ribitylamino)uracil = 6,7-dimethyl-8-(1-D-ribityl)lumazine + phosphate + 2 H2O + H(+). It participates in cofactor biosynthesis; riboflavin biosynthesis; riboflavin from 2-hydroxy-3-oxobutyl phosphate and 5-amino-6-(D-ribitylamino)uracil: step 1/2. Functionally, catalyzes the formation of 6,7-dimethyl-8-ribityllumazine by condensation of 5-amino-6-(D-ribitylamino)uracil with 3,4-dihydroxy-2-butanone 4-phosphate. This is the penultimate step in the biosynthesis of riboflavin. The protein is 6,7-dimethyl-8-ribityllumazine synthase of Campylobacter jejuni subsp. jejuni serotype O:2 (strain ATCC 700819 / NCTC 11168).